The primary structure comprises 1684 residues: MSFVGGGGCGGQDVHKFVEALQADFKTLSLETKKKYPQIKEACEEAISKLCTAGSSQQNSVYYTVNQILYPLVQGCETKDLKIIKFCLGMMQRLITQQVVDQKGALYITNALWTLMENNIEEVKVLQTVTLLLTTNTVVHGDTLAKALVLCFRLHYAKNPTIVNTAGATIRQLVSLVFERVYLEKDSVSSLQQQQSSGSPAEGEGGNQDVQTFASDAFLLFQDLVQLVNADQPYWLLGMTEMTRTFGLELLEAVLTNFSAVFHESNDFRLLLKERVCALVIKLFSPNVKHRQLPAPSNGNAPVPAEKPYFPISMRLLRLVAILIQKYHTILVTECEIFLSLIIKFLDPDKPAWQRALALEVIHKLVTRSSLIAFFCKSYDLKNHATNIVHDMIAAMGSYIRYSLINASAMLNGQQNGVANSLTAMSGSNQCGFMFRGAYLPLVATYAPGVSKAVYLEMLDKIDASNIPDSYGISVGHAILLDMTRSIGGVIQRTPELHPSHNTAVITEEEHKPLCLQLVNSSWSALLSAFIPLVETSIDEATTENILKAMQNYAALCGMLEQLQPRDAFIMAMCRASFPPHYAMSIFANTTQSDGDLRCHTRSGSQDLSSQFINSCSGDAGDFRPQIVAVGTPLPSASLPHSVMQAPVMLTNKNLQCMRAILFLAHNNGGILGTSWHIVLQTLQHLVWILGLKPSTGGSLQAMPKPAVEANVGIQTAVMADLPVLSQMLSQLFESSQYLDDVALHHLIDALCKLSHEAMELAYANREPSLFAVAKLLETGLVNMPRIKVLWRPLTNHLLEVCQHRHIRMREWGVEAITYLVKSALQFKHKTPLKENMELQTMLLSPLSELSTVLHADVRQRQLDCVLQILNTAGEILSFGWPAIIEIIGAVNEHHGEPLIRTAFQCLQLVITDFLTVMPWRCLPLCISTAAKFGSQTQELNISLTAIGLMWNISDFFNQNQDKLMSTQLQDVSILPDFPGTVKMPQFDKLWMCLYAKLGELCVDLRPAVRKSAGQTLFSTISAHGSLLNPPTWQALVWQVLFPLLDNVRALSSSASNEKVDASGNILIHHSRNTAQKQWAETQVLTLSGVCRVFNTKRELLQMLGDFERAWSLILEFIQNAALSKNGEVSLAALKSLQEIMYHNTAERTERALKDPQTAQEQDEEIWTIAWNIWLSIGMESTKMSTSTSAKLQQQNSNGAETQEDFYIPSQAFLTALIQIFPAIFQHIQVKFTAADFDKFCTVLTNAVCIPVQTDAVPYIMSTVSDTLLTPLHDGILDCMELIQKEATKPDSHISQLIPAIFRQLLIFSKFACAPPTFQQSVEHKYAKSSGHYANNASVEVVSMNYIPFGEKSISICVKLYQTTATEDSVVQEQILHDIVKALRTPLAMKYKCLSSSTWKLAISSLISVLHTGLKVARAKPQHFASLWDDLADTLDKFLFPASVCTIEDRGLEEIVLDETIDCQVIELLRDEVLPHSHEMPHQFIMQIVVLLNKGSIHSASDTNICYESDWKLREIFAKTCFETLLQFSLLEDHANTNNNRLNANVLTAGAAGAGGKDFAGRLAVTALLHRFQEVLKRFNDDERQSGKCPLPRFRLSEISFVLKAIATLVVSMKKAPASKVNKPAWDQLIGLYPYLVDCTTTTSPEVSRSLREALLQYTDLLQAPRSCSAATSNDNVIQSNGQE.

The protein belongs to the MON2 family.

Its function is as follows. May be required for traffic between late Golgi and early endosomes. The sequence is that of Protein MON2 homolog (mon2) from Drosophila melanogaster (Fruit fly).